The sequence spans 257 residues: RING1 and YY1-binding protein B (257 aa).

Disordered stretches follow at residues 1 to 24 (MGDKKSPTRPKRQAKPTADNGFWD) and 45 to 257 (RKGT…DESF). Residues 19-48 (DNGFWDCSVCTFRNSAEAFKCSICDVRKGT) form a RanBP2-type zinc finger. The segment covering 74–129 (PKKEKKEKPERPEKDRAEEERPDINPPDEHPVEQRDKDKSEKEQPEKEKKDREKEI) has biased composition (basic and acidic residues). The segment covering 149-168 (HQSPPSERNSIQSGKSTTKT) has biased composition (polar residues). Basic residues predominate over residues 169-178 (KNSHNSRPKL). Residues 209–233 (TSSTSSSTVTSSASSEQQHQSSGSE) show a composition bias toward low complexity.

The protein resides in the nucleus. It localises to the cytoplasm. Its function is as follows. May be implicated in the regulation of the transcription as a repressor of the transcriptional activity of E4TF1. This Danio rerio (Zebrafish) protein is RING1 and YY1-binding protein B (rybpb).